Here is a 456-residue protein sequence, read N- to C-terminus: MGVANIIYALFLLGPSIFLKATAQTHPIVIKGNAFFDSKTNERFYIRGVDYQPGGSSSLVDPLASRSCKKDVEIFKKLGINTVRVYQVDNSADHDKCMNALSEAGIYVILDLNTYRHSISRAHPALSYNKVYLQHLFATIDAFKGYDNVLGFFSGNEVVNDEDTTAITWVKAVTRDVKAYIKKHSDRHIPVGYSAADVAENRLQLAHYFNCGDESERADFYAFNMYEWCGYSSMTVSGYYDRIKEFSNYSIPLFLSEFGCNTVEINDDTTPNRPFTEIEAIYSHDMTPVFSGGLVYEYSAEPNHYGLVVIDKDDERRVSRNFITLMKQYAKTPNPKGDGGYKKAGSPSKCPANSTQFNAWEKLPEMPEGAKIYMEKGAGEPLGIEGPTNMWSPFHDGDDDESTSRRPKPKNKPSNVTSTTSYTSGMTSSSESGSSKIGVAFCQALFITVLIATLSF.

The N-terminal stretch at 1-25 (MGVANIIYALFLLGPSIFLKATAQT) is a signal peptide. The cysteines at positions 68 and 97 are disulfide-linked. Residues Tyr-86, Asn-156, Glu-157, Asp-197, and Arg-202 each coordinate (1,3-beta-D-glucosyl)n. Glu-157 (proton donor) is an active-site residue. Intrachain disulfides connect Cys-211–Cys-350 and Cys-229–Cys-260. Asn-248 is a glycosylation site (N-linked (GlcNAc...) asparagine). Glu-257 serves as the catalytic Nucleophile. Tyr-296 contributes to the (1,3-beta-D-glucosyl)n binding site. 2 disordered regions span residues 334–353 (NPKGDGGYKKAGSPSKCPAN) and 384–434 (IEGP…ESGS). N-linked (GlcNAc...) asparagine glycosylation is found at Asn-353 and Asn-415. The span at 417–434 (TSTTSYTSGMTSSSESGS) shows a compositional bias: low complexity. Ser-432 is lipidated: GPI-anchor amidated serine. The propeptide at 433–456 (GSSKIGVAFCQALFITVLIATLSF) is removed in mature form.

This sequence belongs to the glycosyl hydrolase 72 family.

The protein localises to the cell membrane. In terms of biological role, splits internally a 1,3-beta-glucan molecule and transfers the newly generated reducing end (the donor) to the non-reducing end of another 1,3-beta-glucan molecule (the acceptor) forming a 1,3-beta linkage, resulting in the elongation of 1,3-beta-glucan chains in the cell wall. Involved in spore wall assembly. This chain is 1,3-beta-glucanosyltransferase gas4 (gas4), found in Schizosaccharomyces pombe (strain 972 / ATCC 24843) (Fission yeast).